We begin with the raw amino-acid sequence, 173 residues long: ATP-dependent protease subunit HslV (173 aa).

Threonine 2 is an active-site residue. Na(+) is bound by residues glycine 158, aspartate 161, and serine 164.

This sequence belongs to the peptidase T1B family. HslV subfamily. A double ring-shaped homohexamer of HslV is capped on each side by a ring-shaped HslU homohexamer. The assembly of the HslU/HslV complex is dependent on binding of ATP.

It is found in the cytoplasm. The enzyme catalyses ATP-dependent cleavage of peptide bonds with broad specificity.. With respect to regulation, allosterically activated by HslU binding. Its function is as follows. Protease subunit of a proteasome-like degradation complex believed to be a general protein degrading machinery. This Mannheimia haemolytica (Pasteurella haemolytica) protein is ATP-dependent protease subunit HslV.